Here is a 218-residue protein sequence, read N- to C-terminus: Small ribosomal subunit protein uS3c (218 aa).

The KH type-2 domain maps to 47–118; sequence VQKNMRTSSG…KLNIAVTRIA (72 aa).

Belongs to the universal ribosomal protein uS3 family. As to quaternary structure, part of the 30S ribosomal subunit.

It is found in the plastid. The protein localises to the chloroplast. The protein is Small ribosomal subunit protein uS3c (rps3) of Nicotiana sylvestris (Wood tobacco).